The chain runs to 230 residues: Ribonuclease 3 (230 aa).

The 130-residue stretch at E5–G134 folds into the RNase III domain. A Mg(2+)-binding site is contributed by E47. D51 is an active-site residue. The Mg(2+) site is built by D120 and E123. The active site involves E123. Residues D160–E229 form the DRBM domain.

The protein belongs to the ribonuclease III family. Homodimer. The cofactor is Mg(2+).

It is found in the cytoplasm. It carries out the reaction Endonucleolytic cleavage to 5'-phosphomonoester.. Digests double-stranded RNA. Involved in the processing of primary rRNA transcript to yield the immediate precursors to the large and small rRNAs (23S and 16S). Processes some mRNAs, and tRNAs when they are encoded in the rRNA operon. Processes pre-crRNA and tracrRNA of type II CRISPR loci if present in the organism. The protein is Ribonuclease 3 of Streptococcus equi subsp. zooepidemicus (strain H70).